Consider the following 184-residue polypeptide: Ribosome maturation factor RimM (184 aa).

The PRC barrel domain maps to 101–180; it reads EGEFFYCDLV…KITTHNAKTL (80 aa).

The protein belongs to the RimM family. In terms of assembly, binds ribosomal protein uS19.

Its subcellular location is the cytoplasm. Its function is as follows. An accessory protein needed during the final step in the assembly of 30S ribosomal subunit, possibly for assembly of the head region. Essential for efficient processing of 16S rRNA. May be needed both before and after RbfA during the maturation of 16S rRNA. It has affinity for free ribosomal 30S subunits but not for 70S ribosomes. In Helicobacter pylori (strain ATCC 700392 / 26695) (Campylobacter pylori), this protein is Ribosome maturation factor RimM.